The sequence spans 239 residues: Putative glutamine amidotransferase-like protein YfeJ (239 aa).

The 200-residue stretch at 1 to 200 folds into the Glutamine amidotransferase type-1 domain; that stretch reads MRVHFVVHES…IQHSQQELAD (200 aa).

In Salmonella typhimurium (strain LT2 / SGSC1412 / ATCC 700720), this protein is Putative glutamine amidotransferase-like protein YfeJ (yfeJ).